Reading from the N-terminus, the 64-residue chain is Prokaryotic ubiquitin-like protein UBact (64 aa).

The tract at residues 1-64 is disordered; the sequence is MFNGEEVILF…SERYRQRTGE (64 aa). Over residues 22–64 the composition is skewed to basic and acidic residues; that stretch reads REIHKDAPAPKRPETKKTGDRLMDRMKKVDPNQSERYRQRTGE. Glu-64 is covalently cross-linked (Isoglutamyl lysine isopeptide (Glu-Lys) (interchain with K-? in acceptor proteins)).

The protein belongs to the ubiquitin-like protein UBact family.

Its function is as follows. May function as a protein modifier covalently attached to lysine residues of substrate proteins. This may serve to target the modified proteins for degradation by proteasomes. The chain is Prokaryotic ubiquitin-like protein UBact from Leptospirillum ferriphilum (strain ML-04).